Reading from the N-terminus, the 270-residue chain is Small ribosomal subunit protein uS2 (270 aa).

The segment covering 207 to 225 (EEPENTEEAAEEAATEEVV) has biased composition (acidic residues). Positions 207–270 (EEPENTEEAA…SESAPAPVAA (64 aa)) are disordered. Over residues 226 to 258 (ETAAAEAAAATNADNWDVAPDAGAGAADWAATD) the composition is skewed to low complexity.

Belongs to the universal ribosomal protein uS2 family. In terms of assembly, component of the small ribosomal subunit. Mature ribosomes consist of a small (40S) and a large (60S) subunit. The 40S subunit contains about 33 different proteins and 1 molecule of RNA (18S). The 60S subunit contains about 49 different proteins and 3 molecules of RNA (25S, 5.8S and 5S). Interacts with RPS21.

The protein resides in the cytoplasm. Required for the assembly and/or stability of the 40S ribosomal subunit. Required for the processing of the 20S rRNA-precursor to mature 18S rRNA in a late step of the maturation of 40S ribosomal subunits. This chain is Small ribosomal subunit protein uS2, found in Yarrowia lipolytica (strain CLIB 122 / E 150) (Yeast).